A 119-amino-acid polypeptide reads, in one-letter code: Large ribosomal subunit protein bL20 (119 aa).

It belongs to the bacterial ribosomal protein bL20 family.

Functionally, binds directly to 23S ribosomal RNA and is necessary for the in vitro assembly process of the 50S ribosomal subunit. It is not involved in the protein synthesizing functions of that subunit. The protein is Large ribosomal subunit protein bL20 of Albidiferax ferrireducens (strain ATCC BAA-621 / DSM 15236 / T118) (Rhodoferax ferrireducens).